The sequence spans 204 residues: Somatotropin (204 aa).

An N-terminal signal peptide occupies residues 1–17 (MDRAILLLSVLSVGVSS). Glutamine 18 is modified (pyrrolidone carboxylic acid). Histidine 35 contacts Zn(2+). Cysteine 69 and cysteine 177 are oxidised to a cystine. Glutamate 186 is a binding site for Zn(2+). An intrachain disulfide couples cysteine 194 to cysteine 202.

This sequence belongs to the somatotropin/prolactin family.

It is found in the secreted. Growth hormone plays an important role in growth control and is involved in the regulation of several anabolic processes. Implicated as an osmoregulatory substance important for seawater adaptation. In Dicentrarchus labrax (European seabass), this protein is Somatotropin (gh).